Consider the following 815-residue polypeptide: Ferripyoverdine receptor (815 aa).

The signal sequence occupies residues 1-43 (MPAPHGLSPLSKAFLMRRAFQRRILPHSLAMALSLPLAGYVQA). Residues 161–271 (TPRETPQSIT…LGATINLIRK (111 aa)) enclose the TBDR plug domain. The 540-residue stretch at 276 to 815 (EFKGHVELGA…NLMFSTRWDF (540 aa)) folds into the TBDR beta-barrel domain. Positions 798–815 (SASYGDPRNLMFSTRWDF) match the TonB C-terminal box motif.

It belongs to the TonB-dependent receptor family.

Its subcellular location is the cell outer membrane. Its function is as follows. Receptor for the siderophore ferripyoverdine. The protein is Ferripyoverdine receptor (fpvA) of Pseudomonas aeruginosa (strain ATCC 15692 / DSM 22644 / CIP 104116 / JCM 14847 / LMG 12228 / 1C / PRS 101 / PAO1).